Here is a 562-residue protein sequence, read N- to C-terminus: Abrin-c (562 aa).

Residues 1–34 (MDKTLKLLILCLAWTCSFSALRCAARTYPPVATN) form the signal peptide. The residue at position 35 (Gln-35) is a Pyrrolidone carboxylic acid. Glu-198 is an active-site residue. Asn-234 is a glycosylation site (N-linked (GlcNAc...) asparagine). 3 disulfide bridges follow: Cys-281–Cys-303, Cys-320–Cys-339, and Cys-363–Cys-380. The Ricin B-type lectin 1 domain maps to 307–434 (YEPTVRIGGR…YLMRQGWRTG (128 aa)). One copy of the 1-alpha repeat lies at 317 to 359 (DGMCVDVYDDGYHNGNRIIAWKCKDRLEENQLWTLKSDKTIRS). Residues 360-400 (NGKCLTTEGYAPGNYVMIYDCTSAVAEATYWEIWDNGTIIN) form a 1-beta repeat. Residues Asn-395 and Asn-435 are each glycosylated (N-linked (GlcNAc...) asparagine). One copy of the 1-gamma repeat lies at 403–435 (SALVLSAESSSMGGTLTVQTNEYLMRQGWRTGN). The Ricin B-type lectin 2 domain maps to 437-561 (TSPFVTSISG…GKPNQIWLTL (125 aa)). Residues 448-483 (SDLCMQAQGSNVWLADCDNNKKEQQWALYTDGSIRS) form a 2-alpha repeat. Intrachain disulfides connect Cys-451/Cys-464 and Cys-490/Cys-507. Residues 487 to 526 (TNNCLTSKDHKQGSPIVLMACSNGWASQRWLFKNDGSIYN) form a 2-beta repeat. One copy of the 2-gamma repeat lies at 529–562 (DDMVMDVKRSDPSLKEIILHPYHGKPNQIWLTLF).

It in the N-terminal section; belongs to the ribosome-inactivating protein family. Type 2 RIP subfamily. In terms of assembly, disulfide-linked dimer of A and B chains.

It carries out the reaction Endohydrolysis of the N-glycosidic bond at one specific adenosine on the 28S rRNA.. In terms of biological role, the A chain is responsible for inhibiting protein synthesis through the catalytic inactivation of 60S ribosomal subunits by removing adenine from position 4,324 of 28S rRNA. Abrin-a is more toxic than ricin. The B chain is a galactose-specific lectin that facilitates the binding of abrin to the cell membrane that precedes endocytosis. This Abrus precatorius (Indian licorice) protein is Abrin-c.